Consider the following 99-residue polypeptide: Co-chaperonin GroES (99 aa).

It belongs to the GroES chaperonin family. In terms of assembly, heptamer of 7 subunits arranged in a ring. Interacts with the chaperonin GroEL.

Its subcellular location is the cytoplasm. In terms of biological role, together with the chaperonin GroEL, plays an essential role in assisting protein folding. The GroEL-GroES system forms a nano-cage that allows encapsulation of the non-native substrate proteins and provides a physical environment optimized to promote and accelerate protein folding. GroES binds to the apical surface of the GroEL ring, thereby capping the opening of the GroEL channel. In Corynebacterium efficiens (strain DSM 44549 / YS-314 / AJ 12310 / JCM 11189 / NBRC 100395), this protein is Co-chaperonin GroES.